The following is a 157-amino-acid chain: Tripartite terminase subunit 2 (157 aa).

The tract at residues 1–69 (MSWAKQRVPF…DGEDGHALPD (69 aa)) is disordered. Residues 11–27 (LDDDDGEEENDVQDDVD) show a composition bias toward acidic residues.

Belongs to the herpesviridae TRM2 protein family. In terms of assembly, associates with TRM1 and TRM3 to form the tripartite terminase complex.

It is found in the host nucleus. Its function is as follows. Component of the molecular motor that translocates viral genomic DNA in empty capsid during DNA packaging. Forms a tripartite terminase complex together with TRM1 and TRM3 in the host cytoplasm. Once the complex reaches the host nucleus, it interacts with the capsid portal vertex. This portal forms a ring in which genomic DNA is translocated into the capsid. The chain is Tripartite terminase subunit 2 from Homo sapiens (Human).